The chain runs to 503 residues: MLFLKVRVLDIDLENLVLINSEDLKSSQYFPQDRVVVEFKGKEVIGILHSSTTLINRGEIGLPQKVVKELGVKEGDIVTIKHAEKPKSLPYIRKKMDGNKLKKEEIFEIIDEMVDGKLTNIEISAFVTSLYINGMDMDEIEAMTIRMAETGEMVNWEGHIFDVHSIGGVPGNKYALLVVPIVASAGLKIPKTSSRAITSAAGTADVVEVLTRVDLTIEEIKRVVKETNGCMVWGGALDLAPADDITINVERPLGIDPEPLLLSSVMAKKLAMGVNKLLIDIPTGYGAKVKSIKEASSLARKFIELSDRLRIVTECAITYGGQPIGRAIGPALEAKEALLALEDYTQAPTSLVEKSISLAGILLEMGGVAPTGEGKELAEDLLARGKAHDKFMEIIVAQGGKEVSSDEIEVGKYKADIHSPIDGYVTRISNAGITKIAKEAGAPNDKKAGIYLNVKVGNKVEKGDVLYTIYSDSEERLKSAIKLARILYPIKVEGMLLQKISRF.

Residues Gly168, 194–199, and Thr203 contribute to the AMP site; that span reads SRAITS. Residue Asp256 is the Proton donor of the active site. 2 residues coordinate AMP: Ser264 and Lys288.

It belongs to the thymidine/pyrimidine-nucleoside phosphorylase family. Type 2 subfamily.

It carries out the reaction AMP + phosphate = alpha-D-ribose 1,5-bisphosphate + adenine. The enzyme catalyses CMP + phosphate = cytosine + alpha-D-ribose 1,5-bisphosphate. It catalyses the reaction UMP + phosphate = alpha-D-ribose 1,5-bisphosphate + uracil. In terms of biological role, catalyzes the conversion of AMP and phosphate to adenine and ribose 1,5-bisphosphate (R15P). Exhibits phosphorylase activity toward CMP and UMP in addition to AMP. Functions in an archaeal AMP degradation pathway, together with R15P isomerase and RubisCO. The chain is AMP phosphorylase from Methanocaldococcus jannaschii (strain ATCC 43067 / DSM 2661 / JAL-1 / JCM 10045 / NBRC 100440) (Methanococcus jannaschii).